Reading from the N-terminus, the 309-residue chain is Porphobilinogen deaminase (309 aa).

Residue Cys242 is modified to S-(dipyrrolylmethanemethyl)cysteine.

It belongs to the HMBS family. As to quaternary structure, monomer. The cofactor is dipyrromethane.

The enzyme catalyses 4 porphobilinogen + H2O = hydroxymethylbilane + 4 NH4(+). It functions in the pathway porphyrin-containing compound metabolism; protoporphyrin-IX biosynthesis; coproporphyrinogen-III from 5-aminolevulinate: step 2/4. In terms of biological role, tetrapolymerization of the monopyrrole PBG into the hydroxymethylbilane pre-uroporphyrinogen in several discrete steps. The protein is Porphobilinogen deaminase of Syntrophobacter fumaroxidans (strain DSM 10017 / MPOB).